Reading from the N-terminus, the 528-residue chain is Bifunctional dihydrofolate reductase-thymidylate synthase (528 aa).

The tract at residues M1–P20 is disordered. The DHFR domain occupies T23–R200. Substrate is bound at residue V27. Residues A29 and G35–K41 each bind NADP(+). Residue D49 participates in substrate binding. Residues R73–T75 and L94–S97 each bind NADP(+). I136, Y142, and T157 together coordinate substrate. Position 137–144 (G137–E144) interacts with NADP(+). Positions R202–V528 are thymidylate synthase. R264 provides a ligand contact to dUMP. C409 is a catalytic residue. Residues H410, Q428–D432, N440, and H470–Y472 contribute to the dUMP site.

It in the N-terminal section; belongs to the dihydrofolate reductase family. The protein in the C-terminal section; belongs to the thymidylate synthase family.

It carries out the reaction (6S)-5,6,7,8-tetrahydrofolate + NADP(+) = 7,8-dihydrofolate + NADPH + H(+). The enzyme catalyses dUMP + (6R)-5,10-methylene-5,6,7,8-tetrahydrofolate = 7,8-dihydrofolate + dTMP. It functions in the pathway cofactor biosynthesis; tetrahydrofolate biosynthesis; 5,6,7,8-tetrahydrofolate from 7,8-dihydrofolate: step 1/1. Functionally, bifunctional enzyme. Involved in de novo dTMP biosynthesis. Key enzyme in folate metabolism. Can play two different roles depending on the source of dihydrofolate: de novo synthesis of tetrahydrofolate or recycling of the dihydrofolate released as one of the end products of the TS catalyzed reaction. Catalyzes an essential reaction for de novo glycine and purine synthesis, DNA precursor synthesis, and for the conversion of dUMP to dTMP. This chain is Bifunctional dihydrofolate reductase-thymidylate synthase, found in Daucus carota (Wild carrot).